A 291-amino-acid chain; its full sequence is NAD kinase (291 aa).

Asp73 functions as the Proton acceptor in the catalytic mechanism. Residues 73–74 (DG), 147–148 (ND), Arg175, Asp177, 188–193 (TAYALS), Ala212, and Gln246 contribute to the NAD(+) site.

It belongs to the NAD kinase family. A divalent metal cation serves as cofactor.

The protein localises to the cytoplasm. The catalysed reaction is NAD(+) + ATP = ADP + NADP(+) + H(+). Functionally, involved in the regulation of the intracellular balance of NAD and NADP, and is a key enzyme in the biosynthesis of NADP. Catalyzes specifically the phosphorylation on 2'-hydroxyl of the adenosine moiety of NAD to yield NADP. This is NAD kinase from Polaromonas naphthalenivorans (strain CJ2).